Reading from the N-terminus, the 190-residue chain is Protein GrpE (190 aa).

Over residues 1 to 11 the composition is skewed to polar residues; sequence MSNQDEPQNSP. Residues 1-36 are disordered; the sequence is MSNQDEPQNSPEEFAEDQQADVALEEASSDSSETAA. Positions 13 to 28 are enriched in acidic residues; the sequence is EFAEDQQADVALEEAS.

Belongs to the GrpE family. In terms of assembly, homodimer.

Its subcellular location is the cytoplasm. In terms of biological role, participates actively in the response to hyperosmotic and heat shock by preventing the aggregation of stress-denatured proteins, in association with DnaK and GrpE. It is the nucleotide exchange factor for DnaK and may function as a thermosensor. Unfolded proteins bind initially to DnaJ; upon interaction with the DnaJ-bound protein, DnaK hydrolyzes its bound ATP, resulting in the formation of a stable complex. GrpE releases ADP from DnaK; ATP binding to DnaK triggers the release of the substrate protein, thus completing the reaction cycle. Several rounds of ATP-dependent interactions between DnaJ, DnaK and GrpE are required for fully efficient folding. This is Protein GrpE from Teredinibacter turnerae (strain ATCC 39867 / T7901).